The chain runs to 287 residues: Elongation factor Ts (287 aa).

The tract at residues 80-83 is involved in Mg(2+) ion dislocation from EF-Tu; it reads TDFL.

It belongs to the EF-Ts family.

It localises to the cytoplasm. Functionally, associates with the EF-Tu.GDP complex and induces the exchange of GDP to GTP. It remains bound to the aminoacyl-tRNA.EF-Tu.GTP complex up to the GTP hydrolysis stage on the ribosome. In Pseudomonas savastanoi pv. phaseolicola (strain 1448A / Race 6) (Pseudomonas syringae pv. phaseolicola (strain 1448A / Race 6)), this protein is Elongation factor Ts.